The chain runs to 558 residues: Urocanate hydratase (558 aa).

Residues 53 to 54, glutamine 131, 177 to 179, glutamate 197, arginine 202, 243 to 244, 264 to 268, 274 to 275, and tyrosine 323 contribute to the NAD(+) site; these read GG, GMG, NA, QTSAH, and YL. Residue cysteine 411 is part of the active site. Residue glycine 493 participates in NAD(+) binding.

This sequence belongs to the urocanase family. Requires NAD(+) as cofactor.

The protein resides in the cytoplasm. It catalyses the reaction 4-imidazolone-5-propanoate = trans-urocanate + H2O. It functions in the pathway amino-acid degradation; L-histidine degradation into L-glutamate; N-formimidoyl-L-glutamate from L-histidine: step 2/3. Its function is as follows. Catalyzes the conversion of urocanate to 4-imidazolone-5-propionate. In Idiomarina loihiensis (strain ATCC BAA-735 / DSM 15497 / L2-TR), this protein is Urocanate hydratase.